Here is a 221-residue protein sequence, read N- to C-terminus: Type II secretion system protein J (221 aa).

Residues 1 to 15 constitute a propeptide, leader sequence; sequence MWRTNQVSSRQNMAG. Phenylalanine 16 carries the N-methylphenylalanine modification. Residues 16 to 36 traverse the membrane as a helical segment; that stretch reads FTLIEVLVAIAIFASLSVGAY.

Belongs to the GSP J family. Type II secretion is composed of four main components: the outer membrane complex, the inner membrane complex, the cytoplasmic secretion ATPase and the periplasm-spanning pseudopilus. Interacts with core component epsG. In terms of processing, cleaved by prepilin peptidase. Methylated by prepilin peptidase at the amino group of the N-terminal phenylalanine once the leader sequence is cleaved by prepilin peptidase.

It is found in the cell inner membrane. Its function is as follows. Component of the type II secretion system required for the energy-dependent secretion of extracellular factors such as proteases and toxins from the periplasm. Part of the pseudopilus tip complex that is critical for the recognition and binding of secretion substrates. This is Type II secretion system protein J (epsJ) from Vibrio cholerae serotype O1 (strain ATCC 39315 / El Tor Inaba N16961).